Here is a 236-residue protein sequence, read N- to C-terminus: MKVFPAVDILGGRCVQLVQGRRESATDFGDPLSCATQWLEEGATALHVINLDGAFGKAQANAALIRDLVDVTGVEVQLGGGIRSIADATAWLETGVDRIIIGTLATEHPEVLGTLASEYGGARIMAGVDARDGQIAVEGWQQTRGNFCTWATRFEEQGAGSLLYTNVDIEGLQQGVRLDPVKELIRMVSIPVVVAGGVSSPADLQGLHQAGVAGAVLGSALYSGKITLEEALKAIQ.

The active-site Proton acceptor is the Asp-8. Catalysis depends on Asp-129, which acts as the Proton donor.

This sequence belongs to the HisA/HisF family.

The protein localises to the cytoplasm. The catalysed reaction is 1-(5-phospho-beta-D-ribosyl)-5-[(5-phospho-beta-D-ribosylamino)methylideneamino]imidazole-4-carboxamide = 5-[(5-phospho-1-deoxy-D-ribulos-1-ylimino)methylamino]-1-(5-phospho-beta-D-ribosyl)imidazole-4-carboxamide. Its pathway is amino-acid biosynthesis; L-histidine biosynthesis; L-histidine from 5-phospho-alpha-D-ribose 1-diphosphate: step 4/9. This chain is 1-(5-phosphoribosyl)-5-[(5-phosphoribosylamino)methylideneamino] imidazole-4-carboxamide isomerase, found in Methanosphaerula palustris (strain ATCC BAA-1556 / DSM 19958 / E1-9c).